The chain runs to 290 residues: 4-diphosphocytidyl-2-C-methyl-D-erythritol kinase (290 aa).

Residue Lys11 is part of the active site. Position 97–107 (97–107 (PVAAGIGGGSS)) interacts with ATP. Asp139 is a catalytic residue.

Belongs to the GHMP kinase family. IspE subfamily.

It carries out the reaction 4-CDP-2-C-methyl-D-erythritol + ATP = 4-CDP-2-C-methyl-D-erythritol 2-phosphate + ADP + H(+). It functions in the pathway isoprenoid biosynthesis; isopentenyl diphosphate biosynthesis via DXP pathway; isopentenyl diphosphate from 1-deoxy-D-xylulose 5-phosphate: step 3/6. Catalyzes the phosphorylation of the position 2 hydroxy group of 4-diphosphocytidyl-2C-methyl-D-erythritol. The polypeptide is 4-diphosphocytidyl-2-C-methyl-D-erythritol kinase (Methylobacterium radiotolerans (strain ATCC 27329 / DSM 1819 / JCM 2831 / NBRC 15690 / NCIMB 10815 / 0-1)).